Consider the following 265-residue polypeptide: Hydroxyethylthiazole kinase 2 (265 aa).

Met-39 provides a ligand contact to substrate. ATP contacts are provided by Lys-115 and Thr-168. Gly-195 is a binding site for substrate.

Belongs to the Thz kinase family. It depends on Mg(2+) as a cofactor.

It carries out the reaction 5-(2-hydroxyethyl)-4-methylthiazole + ATP = 4-methyl-5-(2-phosphooxyethyl)-thiazole + ADP + H(+). It participates in cofactor biosynthesis; thiamine diphosphate biosynthesis; 4-methyl-5-(2-phosphoethyl)-thiazole from 5-(2-hydroxyethyl)-4-methylthiazole: step 1/1. Its function is as follows. Catalyzes the phosphorylation of the hydroxyl group of 4-methyl-5-beta-hydroxyethylthiazole (THZ). This Clostridium botulinum (strain Langeland / NCTC 10281 / Type F) protein is Hydroxyethylthiazole kinase 2.